Here is a 370-residue protein sequence, read N- to C-terminus: uncharacterized protein (370 aa).

One can recognise an OBG-type G domain in the interval 62-293; it reads ATVALVGFPS…LKERMWRALG (232 aa). Residues 68–75, 114–118, and 243–246 contribute to the GTP site; these read GFPSVGKS, DVPGL, and NKVD. A TGS domain is found at 293 to 368; that stretch reads GLIRIYMDKP…EDEDVLRVVA (76 aa).

The protein belongs to the TRAFAC class OBG-HflX-like GTPase superfamily. OBG GTPase family.

This is an uncharacterized protein from Halobacterium salinarum (strain ATCC 700922 / JCM 11081 / NRC-1) (Halobacterium halobium).